The primary structure comprises 532 residues: Flavin-containing monooxygenase 3 (532 aa).

Residues Gly9–Ser13, Glu32, Leu40–Trp41, and Asn61–Ser62 each bind FAD. NADP(+)-binding positions include Ser60–Asn61 and Ser195–Asp198. Ser401 bears the Phosphoserine mark. The helical transmembrane segment at Phe510–Val530 threads the bilayer.

It belongs to the FMO family. FAD is required as a cofactor. As to expression, liver.

Its subcellular location is the microsome membrane. It is found in the endoplasmic reticulum membrane. The enzyme catalyses trimethylamine + NADPH + O2 = trimethylamine N-oxide + NADP(+) + H2O. The catalysed reaction is N,N-dimethylaniline + NADPH + O2 + H(+) = N,N-dimethylaniline N-oxide + NADP(+) + H2O. It catalyses the reaction hypotaurine + NADPH + O2 + H(+) = taurine + NADP(+) + H2O. It carries out the reaction (S)-nicotine + NADPH + O2 = trans-(S)-nicotine N(1')-oxide + NADP(+) + H2O. The enzyme catalyses albendazole + NADPH + O2 + H(+) = albendazole S-oxide + NADP(+) + H2O. Functionally, essential hepatic enzyme that catalyzes the oxygenation of a wide variety of nitrogen- and sulfur-containing compounds including drugs as well as dietary compounds. Plays an important role in the metabolism of trimethylamine (TMA), via the production of trimethylamine N-oxide (TMAO) metabolite. TMA is generated by the action of gut microbiota using dietary precursors such as choline, choline containing compounds, betaine or L-carnitine. By regulating TMAO concentration, FMO3 directly impacts both platelet responsiveness and rate of thrombus formation. This chain is Flavin-containing monooxygenase 3 (FMO3), found in Homo sapiens (Human).